The primary structure comprises 125 residues: Succinate dehydrogenase assembly factor 3, mitochondrial (125 aa).

Residues 1-30 constitute a mitochondrion transit peptide; it reads MTGRHVSRVRSLYRRILQLHRALPPDLKAL.

It belongs to the complex I LYR family. SDHAF3 subfamily. As to quaternary structure, interacts with Sdhb within an Sdha-Sdhb subcomplex.

The protein resides in the mitochondrion matrix. Its function is as follows. Plays an essential role in the assembly of succinate dehydrogenase (SDH), an enzyme complex (also referred to as respiratory complex II) that is a component of both the tricarboxylic acid (TCA) cycle and the mitochondrial electron transport chain, and which couples the oxidation of succinate to fumarate with the reduction of ubiquinone (coenzyme Q) to ubiquinol. Promotes maturation of the iron-sulfur protein subunit Sdhb of the SDH catalytic dimer, protecting it from the deleterious effects of oxidants. May act together with SDHAF1. The chain is Succinate dehydrogenase assembly factor 3, mitochondrial from Rattus norvegicus (Rat).